The chain runs to 447 residues: MQGETMSKTYHFIGIKGSGMSALALMLHQMGHKVQGSDVEKYYFTQRGLEQAGIPILPFDEKNITEDVELIAGNAFREDNNVEIAYAIKNGYKFKRYHEFLGHFMNQFTSFGVAGAHGKTSTTGLLSHSMKNITDTSYLIGDGTGRGSANAQYFVFEADEYERHFMPYHPAYSIITNIDFDHPDYFTSIDDVFSAFDDYAKQVQKGLFVYGEDSNLRKITSNAPIYYYGFEENDDFMATDIIRTTTGSNFKVKHDGQIIGEFHVPAYGRHNILNATAVIANLYVAGFDMALVAEHLKTFSGVKRRFTEKIISDTVIIDDFAHHPTEIIATLDAARQKYPSKEIVAIFQPHTFTRTIALLDDFAEALNEADAVYLAQIYGSAREVDHGDVKVEDLAAKINKPAKVVTVENVSPLLDHDNAIYVFMGAGDIQLYERSFEELLASLQTHM.

115–121 (GAHGKTS) contacts ATP.

It belongs to the MurCDEF family.

The protein localises to the cytoplasm. It carries out the reaction UDP-N-acetyl-alpha-D-muramate + L-alanine + ATP = UDP-N-acetyl-alpha-D-muramoyl-L-alanine + ADP + phosphate + H(+). Its pathway is cell wall biogenesis; peptidoglycan biosynthesis. Cell wall formation. This is UDP-N-acetylmuramate--L-alanine ligase from Streptococcus thermophilus (strain CNRZ 1066).